We begin with the raw amino-acid sequence, 481 residues long: Thiol protease (481 aa).

In terms of domain architecture, Calpain catalytic spans 169-481; sequence DLREQALSST…ENFWYIAYMY (313 aa). Active-site residues include C229, H406, and N426.

The protein belongs to the peptidase C2 family.

Its activity is regulated as follows. Inactive below 20 degrees Celsius and pH 6.0. Inhibited by divalent cations. Functionally, thiol protease. Probably an important virulence factor. The protein is Thiol protease (tpr) of Porphyromonas gingivalis (strain ATCC BAA-308 / W83).